The chain runs to 131 residues: Small ribosomal subunit protein uS8 (131 aa).

The protein belongs to the universal ribosomal protein uS8 family. Part of the 30S ribosomal subunit. Contacts proteins S5 and S12.

In terms of biological role, one of the primary rRNA binding proteins, it binds directly to 16S rRNA central domain where it helps coordinate assembly of the platform of the 30S subunit. The protein is Small ribosomal subunit protein uS8 of Helicobacter pylori (strain P12).